The chain runs to 266 residues: tRNA pseudouridine synthase A (266 aa).

The active-site Nucleophile is the D52. Y113 lines the substrate pocket.

The protein belongs to the tRNA pseudouridine synthase TruA family. In terms of assembly, homodimer.

It catalyses the reaction uridine(38/39/40) in tRNA = pseudouridine(38/39/40) in tRNA. In terms of biological role, formation of pseudouridine at positions 38, 39 and 40 in the anticodon stem and loop of transfer RNAs. This Agrobacterium fabrum (strain C58 / ATCC 33970) (Agrobacterium tumefaciens (strain C58)) protein is tRNA pseudouridine synthase A.